A 688-amino-acid polypeptide reads, in one-letter code: Protein sel-1 homolog 2 (688 aa).

The first 18 residues, 1–18, serve as a signal peptide directing secretion; that stretch reads MNPLALLVEILIIIEVTT. The Extracellular portion of the chain corresponds to 19-662; it reads KNTEAERYNR…KWKWLKLDST (644 aa). Asn34 is a glycosylation site (N-linked (GlcNAc...) asparagine). Sel1-like repeat units lie at residues 107-142, 143-178, 179-214, 215-250, 297-333, 334-370, 371-406, 407-442, 443-478, 551-586, and 588-623; these read GDELFKMGNKILQESKSQKQKTEAYTLFTRAANMGN, LKAMEKMADAWLFGSFGMQNITAAIQLYESLAKEGS, YKAQNALGFLSSYGIGMEYDQAKALIYYTFGSAGGS, MMSQMILGYRYLSGINVLQNCEVALNHYKKVADYIA, VQIQVSLGQLHLIGRKGLDQDYSKALYYFLKAAKAGS, ANAMAFIGKMYFEGNAAAPQNNATAFKYFSMAASKGN, AIGLHGLGLLYFHGKGVPVNYGEALKYFQKAAEKGW, PNAQFQLGFMYYSGSGVWKDYKLAFKYFYLASQSGQ, PLAIYYLAEMYATGTGVLRSCRTAVELYKGVCELGH, AFARVKIGDYHYYGYGTKKDYETAATHYSIAADKHH, and AQAMFNLAYMYEHGLGIAKDIHLARRLYDMAAQTSP. N-linked (GlcNAc...) asparagine glycosylation is present at Asn162. Residues 663–683 form a helical membrane-spanning segment; it reads VGPYWDLLVIGLIVAMLIFLL. The Cytoplasmic portion of the chain corresponds to 684–688; the sequence is RNRHR.

This sequence belongs to the sel-1 family.

The protein localises to the membrane. The protein resides in the cell projection. Its subcellular location is the cilium. It is found in the nucleus speckle. In Mus musculus (Mouse), this protein is Protein sel-1 homolog 2 (Sel1l2).